A 150-amino-acid polypeptide reads, in one-letter code: Snaclec rhinocetin subunit beta (150 aa).

The signal sequence occupies residues 1 to 23; it reads MGRFIFLSSGLLVVFLSLSGTGA. Disulfide bonds link Cys27-Cys38, Cys55-Cys144, and Cys121-Cys136. Positions 34–145 constitute a C-type lectin domain; sequence YEGYCYKVFK…CNRQQYFVCK (112 aa).

This sequence belongs to the snaclec family. As to quaternary structure, heterodimer; disulfide-linked. Expressed by the venom gland.

It localises to the secreted. In terms of biological role, antagonist of the alpha-2 subunit of the integrin alpha-2/beta-1 (ITGA2/ITGB1) on human platelets and endothelial cells. This protein inhibits collagen-stimulated activation of human platelets in a dose-dependent manner. In addition, it antagonizes the binding of monoclonal antibodies against the alpha-2 subunit of integrin alpha-2/beta-1 to platelets and it coimmunoprecipitates with this integrin. In Bitis rhinoceros (West African gaboon viper), this protein is Snaclec rhinocetin subunit beta.